The following is a 132-amino-acid chain: Outer membrane protein RomA (132 aa).

This sequence to M.tuberculosis Rv0906.

It is found in the cell outer membrane. This chain is Outer membrane protein RomA (romA), found in Klebsiella pneumoniae.